The primary structure comprises 244 residues: Mediator of RNA polymerase II transcription subunit 19 (244 aa).

Disordered stretches follow at residues 1–67 (MENF…PFYL) and 171–244 (PKKK…SSLR). Over residues 26 to 38 (GKPPPPPPPPPGG) the composition is skewed to pro residues. Positions 44–55 (PPSTATSAPAGA) are enriched in low complexity. Basic residues predominate over residues 171 to 182 (PKKKNKHKHKQS). Residue serine 194 is modified to Phosphoserine. Basic residues predominate over residues 212 to 224 (KRKKKEKKKKKNR). Serine 226 is modified (phosphoserine). Residues 234–244 (SSQASSSSSLR) show a composition bias toward low complexity.

It belongs to the Mediator complex subunit 19 family. As to quaternary structure, component of the Mediator complex, which is composed of MED1, MED4, MED6, MED7, MED8, MED9, MED10, MED11, MED12, MED13, MED13L, MED14, MED15, MED16, MED17, MED18, MED19, MED20, MED21, MED22, MED23, MED24, MED25, MED26, MED27, MED29, MED30, MED31, CCNC, CDK8 and CDC2L6/CDK11. The MED12, MED13, CCNC and CDK8 subunits form a distinct module termed the CDK8 module. Mediator containing the CDK8 module is less active than Mediator lacking this module in supporting transcriptional activation. Individual preparations of the Mediator complex lacking one or more distinct subunits have been variously termed ARC, CRSP, DRIP, PC2, SMCC and TRAP.

Its subcellular location is the nucleus. Component of the Mediator complex, a coactivator involved in the regulated transcription of nearly all RNA polymerase II-dependent genes. Mediator functions as a bridge to convey information from gene-specific regulatory proteins to the basal RNA polymerase II transcription machinery. Mediator is recruited to promoters by direct interactions with regulatory proteins and serves as a scaffold for the assembly of a functional preinitiation complex with RNA polymerase II and the general transcription factors. The chain is Mediator of RNA polymerase II transcription subunit 19 (Med19) from Mus musculus (Mouse).